The sequence spans 307 residues: N-acetylmuramic acid 6-phosphate etherase (307 aa).

In terms of domain architecture, SIS spans 62 to 225 (IVSSFNRGGR…STASMIRIGK (164 aa)). Glu-90 (proton donor) is an active-site residue. Glu-121 is a catalytic residue.

Belongs to the GCKR-like family. MurNAc-6-P etherase subfamily. In terms of assembly, homodimer.

It carries out the reaction N-acetyl-D-muramate 6-phosphate + H2O = N-acetyl-D-glucosamine 6-phosphate + (R)-lactate. It participates in amino-sugar metabolism; 1,6-anhydro-N-acetylmuramate degradation. It functions in the pathway amino-sugar metabolism; N-acetylmuramate degradation. Its pathway is cell wall biogenesis; peptidoglycan recycling. Its function is as follows. Specifically catalyzes the cleavage of the D-lactyl ether substituent of MurNAc 6-phosphate, producing GlcNAc 6-phosphate and D-lactate. Together with AnmK, is also required for the utilization of anhydro-N-acetylmuramic acid (anhMurNAc) either imported from the medium or derived from its own cell wall murein, and thus plays a role in cell wall recycling. In Pseudoalteromonas atlantica (strain T6c / ATCC BAA-1087), this protein is N-acetylmuramic acid 6-phosphate etherase.